The following is a 492-amino-acid chain: Sestrin-1 (492 aa).

The N-terminal domain; may mediate the alkylhydroperoxide reductase activity stretch occupies residues 71 to 252; sequence FADSFAALGR…ICDITNGNHS (182 aa). Residue Cys130 is the Cysteine sulfenic acid (-SOH) intermediate of the active site. A phosphoserine mark is found at Ser293 and Ser314. Residues 321–492 are C-terminal domain; mediates TORC1 regulation; it reads PARDVSRHFE…ALRAITRYMT (172 aa). Residues 386 to 389, Thr398, and Glu463 contribute to the L-leucine site; that span reads TYNT.

Belongs to the sestrin family. As to quaternary structure, interacts with the GATOR2 complex which is composed of MIOS, SEC13, SEH1L, WDR24 and WDR59; the interaction is negatively regulated by leucine. Interacts with RRAGA, RRAGB, RRAGC and RRAGD; may function as a guanine nucleotide dissociation inhibitor for RRAGs and regulate them. Interacts with KEAP1, RBX1 and SQSTM1; in the SQSTM1-dependent autophagic degradation of KEAP1. May interact with PRDX1.

It is found in the nucleus. The protein resides in the cytoplasm. It catalyses the reaction a hydroperoxide + L-cysteinyl-[protein] = S-hydroxy-L-cysteinyl-[protein] + an alcohol. Functions as an intracellular leucine sensor that negatively regulates the TORC1 signaling pathway through the GATOR complex. In absence of leucine, binds the GATOR subcomplex GATOR2 and prevents TORC1 signaling. Binding of leucine to SESN2 disrupts its interaction with GATOR2 thereby activating the TORC1 signaling pathway. This stress-inducible metabolic regulator may also play a role in protection against oxidative and genotoxic stresses. May positively regulate the transcription by NFE2L2 of genes involved in the response to oxidative stress by facilitating the SQSTM1-mediated autophagic degradation of KEAP1. Moreover, may prevent the accumulation of reactive oxygen species (ROS) through the alkylhydroperoxide reductase activity born by the N-terminal domain of the protein. Was originally reported to contribute to oxidative stress resistance by reducing PRDX1. However, this could not be confirmed. The polypeptide is Sestrin-1 (Macaca fascicularis (Crab-eating macaque)).